The following is a 446-amino-acid chain: Phosphoglucosamine mutase (446 aa).

Catalysis depends on serine 103, which acts as the Phosphoserine intermediate. 4 residues coordinate Mg(2+): serine 103, aspartate 242, aspartate 244, and aspartate 246. The residue at position 103 (serine 103) is a Phosphoserine.

Belongs to the phosphohexose mutase family. The cofactor is Mg(2+). Post-translationally, activated by phosphorylation.

The enzyme catalyses alpha-D-glucosamine 1-phosphate = D-glucosamine 6-phosphate. In terms of biological role, catalyzes the conversion of glucosamine-6-phosphate to glucosamine-1-phosphate. The polypeptide is Phosphoglucosamine mutase (Vibrio cholerae serotype O1 (strain ATCC 39315 / El Tor Inaba N16961)).